The primary structure comprises 3177 residues: Proliferation marker protein Ki-67 (3177 aa).

The FHA domain maps to 27–76 (CLFGRSIECDIRIQLPVVSKRHCKIEVKEQEAILYNFSSTNPTQVNGVTI). 2 stretches are compositionally biased toward basic and acidic residues: residues 98–107 (EDGNHEDGSK) and 116–126 (LGKEPSRRASR). Disordered regions lie at residues 98 to 442 (EDGN…PGLS) and 473 to 572 (RPEL…ASIS). A phosphoserine mark is found at Ser125, Ser128, and Ser162. 2 stretches are compositionally biased toward polar residues: residues 165-177 (SDGSKNSVSQDSS) and 202-221 (STGSSYREPKSSPTQSLSNS). Over residues 235-263 (MKEELDVKSQKSCRKSEPQPDRAAEESRE) the composition is skewed to basic and acidic residues. Lys236 is covalently cross-linked (Glycyl lysine isopeptide (Lys-Gly) (interchain with G-Cter in SUMO2)). Phosphoserine is present on residues Ser250, Ser276, Ser277, Ser286, and Ser287. Polar residues predominate over residues 276–286 (SSGSTPVTAAS). 2 positions are modified to phosphothreonine: Thr307 and Thr316. 6 positions are modified to phosphoserine: Ser321, Ser337, Ser373, Ser498, Ser503, and Ser588. The interval 455–618 (KSEGMPMKRR…VKQTQTKVAK (164 aa)) is positively charged patch (CP). The PP1-binding domain maps to 462–509 (KRRRVSFGGHLRPELFDENLPPNTPLKRGETPTKRKSLGTHSPAVLKT). Residues 614–652 (TKVAKHVPQKQTSKRQRRPSTPKKPTSNLHNQFTTGHAN) are disordered. A compositionally biased stretch (basic residues) spans 616–634 (VAKHVPQKQTSKRQRRPST). Residues 636-652 (KKPTSNLHNQFTTGHAN) show a composition bias toward polar residues. Thr701 is subject to Phosphothreonine. Disordered regions lie at residues 793–815 (LEKKTPVSETEPLKTASSVSKLR), 835–901 (VLAE…LGSQ), and 956–989 (KHSPKTPGKKAQPLEGPAGLKEHFETPNPKDKPI). Residues 855 to 864 (DQQVQDNENA) are compositionally biased toward polar residues. Basic and acidic residues-rich tracts occupy residues 867–882 (RCKESGELSEGSEKTS) and 975–989 (LKEHFETPNPKDKPI). 16 K167R repeats span residues 994–1101 (TRVL…FISP), 1108–1216 (KKIP…FQTP), 1228–1336 (SAKI…FQTP), 1348–1450 (SAKM…FQIP), 1461–1569 (KTKK…FQMP), 1582–1684 (TMLA…LFQT), 1696–1806 (KQTR…FQTP), 1817–1925 (ETTK…FQTP), 1937–2046 (SAKI…FQTP), 2059–2163 (VKMS…FQTP), 2175–2284 (SAKM…FQTP), 2296–2405 (SAKI…VFQT), 2419–2526 (AKLP…CQAP), 2537–2639 (KTPK…SFQE), 2643–2748 (KRIS…PIQT), and 2762–2870 (TQMP…ITQI). Residues Lys1013 and Lys1026 each participate in a glycyl lysine isopeptide (Lys-Gly) (interchain with G-Cter in SUMO2) cross-link. A Phosphoserine modification is found at Ser1062. Lys1082 is covalently cross-linked (Glycyl lysine isopeptide (Lys-Gly) (interchain with G-Cter in SUMO1); alternate). Residue Lys1082 forms a Glycyl lysine isopeptide (Lys-Gly) (interchain with G-Cter in SUMO2); alternate linkage. Disordered regions lie at residues 1109-1321 (KIPS…IRAQ) and 1334-1410 (QTPA…ENDC). Ser1114 carries the post-translational modification Phosphoserine. Polar residues predominate over residues 1114 to 1127 (SPHTQPVRTPASTK). At Thr1122 the chain carries Phosphothreonine. Ser1125 carries the post-translational modification Phosphoserine. Thr1150 carries the post-translational modification Phosphothreonine. Phosphoserine is present on Ser1152. Phosphothreonine is present on residues Thr1159 and Thr1175. The residue at position 1189 (Ser1189) is a Phosphoserine. Residue Thr1215 is modified to Phosphothreonine. At Ser1235 the chain carries Phosphoserine. Phosphothreonine occurs at positions 1243, 1279, 1295, 1307, and 1315. Residues 1308–1317 (GHKRRPRTPK) are compositionally biased toward basic residues. Lys1317 is covalently cross-linked (Glycyl lysine isopeptide (Lys-Gly) (interchain with G-Cter in SUMO2)). Position 1335 is a phosphothreonine (Thr1335). The segment covering 1353–1368 (LESSQAEPVKTPASTK) has biased composition (polar residues). Residue Ser1356 is modified to Phosphoserine. Thr1363 is modified (phosphothreonine). Ser1366 bears the Phosphoserine mark. Residues 1371 to 1384 (SKTDLSKVDVREDP) are compositionally biased toward basic and acidic residues. A phosphothreonine mark is found at Thr1400 and Thr1416. Ser1469 carries the phosphoserine modification. At Thr1477 the chain carries Phosphothreonine. Ser1480 carries the post-translational modification Phosphoserine. Thr1513 is subject to Phosphothreonine. Residues 1526-1550 (RKPAKRKLDSTAGMPNSKRMRCSSK) form a disordered region. Phosphoserine is present on residues Ser1542 and Ser1587. The residue at position 1609 (Lys1609) is an N6-acetyllysine. Lys1668 is covalently cross-linked (Glycyl lysine isopeptide (Lys-Gly) (interchain with G-Cter in SUMO2)). Phosphothreonine is present on residues Thr1684 and Thr1712. At Ser1734 the chain carries Phosphoserine. The segment at 1749 to 1797 (IPIGPEDDTENKGVKESTPQTLDSSASRTVSKRQQGAHEERPQFSGDLF) is disordered. Residues 1765–1782 (STPQTLDSSASRTVSKRQ) are compositionally biased toward polar residues. Position 1766 is a phosphothreonine (Thr1766). At Ser1779 the chain carries Phosphoserine. Thr1805 is modified (phosphothreonine). Ser1825 is modified (phosphoserine). Phosphothreonine occurs at positions 1859, 1868, 1884, and 1924. The segment at 1925–2033 (PAGASDPVSV…QTPKIRAQPL (109 aa)) is disordered. The residue at position 1944 (Ser1944) is a Phosphoserine. Lys1966 carries the post-translational modification N6-acetyllysine. Thr1989, Thr2005, and Thr2025 each carry phosphothreonine. Residue Lys2027 forms a Glycyl lysine isopeptide (Lys-Gly) (interchain with G-Cter in SUMO1); alternate linkage. Residue Lys2027 forms a Glycyl lysine isopeptide (Lys-Gly) (interchain with G-Cter in SUMO2); alternate linkage. Thr2045 is subject to Phosphothreonine. The tract at residues 2047-2112 (AGANDSVTVE…SPGTPAPVQE (66 aa)) is disordered. Residues 2063–2078 (LESSQAEPVKTPASTK) are compositionally biased toward polar residues. The residue at position 2065 (Ser2065) is a Phosphoserine. Thr2073 carries the phosphothreonine modification. Residues Ser2076, Ser2095, and Ser2103 each carry the phosphoserine modification. Positions 2088–2101 (VDVREDPSILEKKT) are enriched in basic and acidic residues. A phosphothreonine mark is found at Thr2106 and Thr2122. Residues 2124 to 2343 (KQKLDFTGNS…PLSKSSCASQ (220 aa)) are disordered. The span at 2135 to 2144 (GHKRRPRTPK) shows a compositional bias: basic residues. Phosphothreonine is present on Thr2162. A compositionally biased stretch (polar residues) spans 2180–2195 (LESSQAKPVKTPASTK). Ser2182 carries the phosphoserine modification. Position 2190 is a phosphothreonine (Thr2190). Residue Ser2198 is modified to Phosphoserine. At Thr2218 the chain carries Phosphothreonine. Phosphoserine is present on Ser2220. Residues Thr2227, Thr2243, and Thr2283 each carry the phosphothreonine modification. Phosphoserine is present on Ser2303. Phosphothreonine is present on residues Thr2311 and Thr2348. The span at 2378-2390 (RGKRQQRSCKKRS) shows a compositional bias: basic residues. Positions 2378–2447 (RGKRQQRSCK…RRQARTGLRK (70 aa)) are disordered. Ser2390 and Ser2392 each carry phosphoserine. Thr2405 carries the phosphothreonine modification. Phosphoserine is present on residues Ser2423 and Ser2425. Residue Lys2451 forms a Glycyl lysine isopeptide (Lys-Gly) (interchain with G-Cter in SUMO1) linkage. Residues Ser2464, Ser2487, Ser2545, and Ser2592 each carry the phosphoserine modification. Residues 2538–2547 (TPKMPDKSPE) show a composition bias toward basic and acidic residues. Disordered regions lie at residues 2538–2828 (TPKM…QVSK) and 2879–3160 (HDTS…DAKT). Positions 2605-2622 (VQKQDPSVSLTGRRNQPR) are enriched in polar residues. Ser2649 is subject to Phosphoserine. 2 stretches are compositionally biased toward basic and acidic residues: residues 2673–2697 (GVKEEPTAQRKQPSRETRNTLKEPV) and 2704–2714 (EEVKKSTKQKI). Residue Lys2675 forms a Glycyl lysine isopeptide (Lys-Gly) (interchain with G-Cter in SUMO1); alternate linkage. Residue Lys2675 forms a Glycyl lysine isopeptide (Lys-Gly) (interchain with G-Cter in SUMO2); alternate linkage. Composition is skewed to polar residues over residues 2764-2781 (MPCNSLQPEQVDSFQSSP) and 2883-2892 (ILKSTQQQKP). Phosphoserine is present on residues Ser2768 and Ser2780. The span at 2907–2923 (ASKEDPKEVLVDTRDHA) shows a compositional bias: basic and acidic residues. Lys2909 participates in a covalent cross-link: Glycyl lysine isopeptide (Lys-Gly) (interchain with G-Cter in SUMO2). Lys2928 carries the N6-acetyllysine modification. Residues 2959–2971 (EATDEKPVPEKKR) show a composition bias toward basic and acidic residues. Residue 2973-2980 (ASSKRHVS) participates in ATP binding. A Phosphoserine modification is found at Ser2980. The segment covering 3008-3018 (KTEEMEAKREN) has biased composition (basic and acidic residues). A Phosphothreonine modification is found at Thr3021. The segment covering 3039 to 3057 (PKFDASAENVGIKKNEKTM) has biased composition (basic and acidic residues). Residues 3058 to 3067 (KTASQETELQ) are compositionally biased toward polar residues. Ser3061 carries the phosphoserine modification. 2 stretches are compositionally biased toward basic and acidic residues: residues 3118–3132 (PQEEKGVSGESDVRC) and 3140–3160 (VALDSEPKPRVTRGTKKDAKT).

Interacts with KIF15. Interacts (via the FHA domain) with NIFK. Interacts with PPP1CC. Component of a complex at least composed of ZNF335, HCFC1, CCAR2, EMSY, MKI67, RBBP5, ASH2L and WDR5; the complex is formed as a result of interactions between components of a nuclear receptor-mediated transcription complex and a histone methylation complex. Interacts with ZNF335. In terms of processing, hyperphosphorylated by CDK1 in mitosis; hyperphosphorylatiom prevents undergoing liquid-liquid phase separation. Dephosphorylated by PPP1CC at the onset of anaphase. Dephosphorylation by protein phosphatase 2A (PP2A) and simultaneous exposure of the positively charged patch (CP) during mitotic exit induce the RNA-dependent formation of a liquid-like condensed phase on the chromosome surface. Post-translationally, ubiquitinated by the APC/C complex after neuronal progenitors exit mitosis during brain development, leading to clearance from constitutive heterochromatin. As to expression, mainly present in proliferating cells (at protein level).

The protein resides in the chromosome. It is found in the nucleus. The protein localises to the nucleolus. Functionally, protein that associates with the surface of mitotic chromosomes and acts both as a chromosome repellent during early mitosis and chromosome attractant during late mitosis. Required to maintain individual mitotic chromosomes dispersed in the cytoplasm following nuclear envelope disassembly. During early mitosis, relocalizes from nucleoli to the chromosome surface where it forms extended brush structures that cover a substantial fraction of the chromosome surface. The MKI67 brush structure prevents chromosomes from collapsing into a single chromatin mass by forming a steric and electrostatic charge barrier: the protein has a high net electrical charge and acts as a surfactant, dispersing chromosomes and enabling independent chromosome motility. During mitotic anaphase, the MKI67 brush structure collapses and MKI67 switches from a chromosome repellent to a chromosome attractant to promote chromosome clustering and facilitate the exclusion of large cytoplasmic particles from the future nuclear space. Mechanistically, dephosphorylation during mitotic exit and simultaneous exposure of a conserved basic patch induce the RNA-dependent formation of a liquid-like condensed phase on the chromosome surface, promoting coalescence of neighboring chromosome surfaces and clustering of chromosomes. Binds premature ribosomal RNAs during anaphase; promoting liquid-liquid phase separation. Binds DNA, with a preference for supercoiled DNA and AT-rich DNA. Does not contribute to the internal structure of mitotic chromosomes. May play a role in chromatin organization; it is however unclear whether it plays a direct role in chromatin organization or whether it is an indirect consequence of its function in mitotic chromosome. The polypeptide is Proliferation marker protein Ki-67 (Mus musculus (Mouse)).